An 80-amino-acid chain; its full sequence is Acyl carrier protein (80 aa).

Residues 1-79 enclose the Carrier domain; the sequence is MSQEEILQKV…DAVKFIEAKK (79 aa). The residue at position 39 (Ser-39) is an O-(pantetheine 4'-phosphoryl)serine.

The protein belongs to the acyl carrier protein (ACP) family. In terms of processing, 4'-phosphopantetheine is transferred from CoA to a specific serine of apo-ACP by AcpS. This modification is essential for activity because fatty acids are bound in thioester linkage to the sulfhydryl of the prosthetic group.

It is found in the cytoplasm. It functions in the pathway lipid metabolism; fatty acid biosynthesis. Its function is as follows. Carrier of the growing fatty acid chain in fatty acid biosynthesis. The chain is Acyl carrier protein from Prochlorococcus marinus (strain MIT 9515).